Consider the following 1106-residue polypeptide: Solute carrier family 12 member 7 (1106 aa).

The Cytoplasmic portion of the chain corresponds to 1–143 (MVYTALTWQR…PRESKAPCMG (143 aa)). A disordered region spans residues 17 to 83 (GLVPSHLPQE…SPFIGSAAAD (67 aa)). 2 positions are modified to phosphoserine: serine 74 and serine 86. Residues 144–166 (TFIGVYLPCLQNILGVILFLRLT) form a discontinuously helical membrane-spanning segment. K(+) is bound by residues asparagine 155 and isoleucine 156. Valine 159 contributes to the chloride binding site. Residues 167 to 173 (WIVGAAG) lie on the Extracellular side of the membrane. The helical transmembrane segment at 174 to 196 (VLESFLVVSMCCTCTMLTAVSMS) threads the bilayer. The Cytoplasmic portion of the chain corresponds to 197-220 (AIATNGVVPAGGSYYMISRSLGPE). A helical transmembrane segment spans residues 221–249 (FGGAVGLCFYLGTTFAGAMYILGTIEIFL). Topologically, residues 250 to 273 (TYISPGAAVFQAETPEGEAAALLH) are extracellular. 2 consecutive transmembrane segments (helical) span residues 274–295 (NMRV…VGVK) and 296–324 (YVNK…KTAF). At 325 to 443 (DPPDIPVCLL…PYVLSDITTY (119 aa)) the chain is on the extracellular side. 3 N-linked (GlcNAc...) asparagine glycosylation sites follow: asparagine 336, asparagine 355, and asparagine 384. The helical transmembrane segment at 444-464 (FTVLVGIYFPSVTGIMAGSNR) threads the bilayer. K(+) is bound by residues proline 453 and threonine 456. Proline 453 is a chloride binding site. Chloride is bound by residues glycine 457 and isoleucine 458. The Cytoplasmic segment spans residues 465 to 474 (SGDLKDAQKS). A helical membrane pass occupies residues 475 to 497 (IPTGTILAIVTTSFIYLSCIVLF). Residues 498–528 (GACIEGVVLRDKFGEALQGNLVIGMLAWPSP) are Extracellular-facing. The chain crosses the membrane as a helical span at residues 529–555 (WVIVIGSFFSTCGAGLQSLTGAPRLLQ). Residues 556–578 (AIARDGIVPFLQVFGHGKANGEP) are Cytoplasmic-facing. The next 2 membrane-spanning stretches (helical) occupy residues 579–597 (TWAL…LIAS) and 598–622 (LDSV…ACAV). Tyrosine 613 contacts chloride. The Cytoplasmic portion of the chain corresponds to 623 to 636 (QTLLRTPNWRPRFK). Transmembrane regions (helical) follow at residues 637-659 (YYHW…ICSW) and 660-675 (YYAL…IYKY). The Cytoplasmic segment spans residues 676 to 1106 (IEYRGAEKEW…GGREVITIYS (431 aa)). The interval 688 to 704 (GIRGLSLNAARYALLRV) is scissor helix. Residues 980–999 (RNTASHTAASRAQAPPTPDK) form a disordered region. Threonine 996 and threonine 1003 each carry phosphothreonine.

It belongs to the SLC12A transporter family. K/Cl co-transporter subfamily. In terms of assembly, homodimer; adopts a domain-swap conformation at the scissor helices connecting the transmembrane domain and C-terminal domain. Heterodimer with K-Cl cotransporter SLC12A5. In terms of tissue distribution, widely expressed. Higher levels in heart, kidney and lung (at protein level).

It is found in the cell membrane. It carries out the reaction K(+)(in) + chloride(in) = K(+)(out) + chloride(out). Activated by N-ethylmaleimide (NEM). Inhibited by furosemide, DIDS and bumetanide. The inhibition is much stronger in the presence of 50 mM K(+) in the uptake medium. Inhibited by DIOA. Inhibited by WNK3. In terms of biological role, mediates electroneutral potassium-chloride cotransport when activated by cell swelling. May mediate K(+) uptake into Deiters' cells in the cochlea and contribute to K(+) recycling in the inner ear. Important for the survival of cochlear outer and inner hair cells and the maintenance of the organ of Corti. May be required for basolateral Cl(-) extrusion in the kidney and contribute to renal acidification. This is Solute carrier family 12 member 7 from Oryctolagus cuniculus (Rabbit).